A 318-amino-acid chain; its full sequence is Mitochondrial thiamine pyrophosphate carrier (318 aa).

Solcar repeat units follow at residues 13–106, 116–202, and 214–309; these read ISNV…LTEL, RDFS…LKRA, and NGNF…FCNF. The helical transmembrane segment at 19–39 threads the bilayer; the sequence is AVAGSVSGLVTRVLISPLDVI. Phosphoserine is present on serine 51. Transmembrane regions (helical) follow at residues 87–107, 122–142, 173–193, and 220–240; these read LLSI…TELV, FLCG…VDVL, VFYK…GFQF, and LLCG…LDLF. A Substrate recognition motif is present at residues 241 to 246; it reads KKRLQV. The chain crosses the membrane as a helical span at residues 293 to 313; that stretch reads ALSTGLVFFWYELFCNFFHHM.

The protein belongs to the mitochondrial carrier (TC 2.A.29) family.

The protein resides in the mitochondrion membrane. The catalysed reaction is thiamine phosphate(out) + thiamine diphosphate(in) = thiamine phosphate(in) + thiamine diphosphate(out). Mitochondrial transporter mediating uptake of thiamine diphosphate into mitochondria. It is not clear if the antiporter activity is affected by the membrane potential or by the proton electrochemical gradient. In Bos taurus (Bovine), this protein is Mitochondrial thiamine pyrophosphate carrier (SLC25A19).